The chain runs to 448 residues: Homogentisate 1,2-dioxygenase (448 aa).

The active-site Proton acceptor is the His303. Fe cation-binding residues include His346 and Glu352. Homogentisate contacts are provided by Tyr361 and His382. A Fe cation-binding site is contributed by His382.

Belongs to the homogentisate dioxygenase family. Hexamer; dimer of trimers. Fe cation is required as a cofactor.

The enzyme catalyses homogentisate + O2 = 4-maleylacetoacetate + H(+). The protein operates within amino-acid degradation; L-phenylalanine degradation; acetoacetate and fumarate from L-phenylalanine: step 4/6. Involved in the catabolism of homogentisate (2,5-dihydroxyphenylacetate or 2,5-OH-PhAc), a central intermediate in the degradation of phenylalanine and tyrosine. Catalyzes the oxidative ring cleavage of the aromatic ring of homogentisate to yield maleylacetoacetate. This is Homogentisate 1,2-dioxygenase from Rhodopseudomonas palustris (strain BisB18).